A 710-amino-acid polypeptide reads, in one-letter code: Serine/threonine-protein phosphatase PP-Z2 (710 aa).

Residues 1–382 (MGNSGSKQHT…ADGDNGSRTN (382 aa)) are disordered. A lipid anchor (N-myristoyl glycine) is attached at glycine 2. The segment covering 15 to 27 (KKDDHDGDRKKTL) has biased composition (basic and acidic residues). Over residues 40 to 49 (SLKSSRSLRS) the composition is skewed to low complexity. 2 positions are modified to phosphoserine: serine 55 and serine 71. Composition is skewed to polar residues over residues 62 to 77 (NVQAQTQPLSRRSSTL) and 95 to 104 (PNNHYLTSHP). Composition is skewed to low complexity over residues 105–125 (SSSRRLSSSSRRSSMGNNNNS) and 143–155 (NSTSMHSTSSFNS). The span at 160-172 (LTDDDDDRGDDGG) shows a compositional bias: acidic residues. A Phosphothreonine modification is found at threonine 161. Serine 203 and serine 224 each carry phosphoserine. The span at 247 to 260 (SNRSNSHASSRKSS) shows a compositional bias: low complexity. Residues 261-273 (FGSTGNTAYSTPL) show a composition bias toward polar residues. At threonine 271 the chain carries Phosphothreonine. Residue serine 275 is modified to Phosphoserine. Residues 291–302 (DNVNGRGTSPIP) show a composition bias toward polar residues. Residue serine 310 is modified to Phosphoserine. 4 residues coordinate Mn(2+): aspartate 454, histidine 456, aspartate 482, and asparagine 514. Histidine 515 acts as the Proton donor in catalysis. The Mn(2+) site is built by histidine 563 and histidine 638.

The protein belongs to the PPP phosphatase family. PP-Z subfamily. Mn(2+) serves as cofactor.

It catalyses the reaction O-phospho-L-seryl-[protein] + H2O = L-seryl-[protein] + phosphate. The catalysed reaction is O-phospho-L-threonyl-[protein] + H2O = L-threonyl-[protein] + phosphate. Its function is as follows. Essential for the maintenance of cell size and integrity in response to osmotic stress. The chain is Serine/threonine-protein phosphatase PP-Z2 (PPZ2) from Saccharomyces cerevisiae (strain ATCC 204508 / S288c) (Baker's yeast).